We begin with the raw amino-acid sequence, 583 residues long: Threonine--tRNA ligase (583 aa).

The segment at 185–478 (DHRKLGRELD…LVEHYGGAFP (294 aa)) is catalytic. C278, H329, and H455 together coordinate Zn(2+).

It belongs to the class-II aminoacyl-tRNA synthetase family. As to quaternary structure, homodimer. The cofactor is Zn(2+).

The protein resides in the cytoplasm. It catalyses the reaction tRNA(Thr) + L-threonine + ATP = L-threonyl-tRNA(Thr) + AMP + diphosphate + H(+). Its function is as follows. Catalyzes the attachment of threonine to tRNA(Thr) in a two-step reaction: L-threonine is first activated by ATP to form Thr-AMP and then transferred to the acceptor end of tRNA(Thr). Also edits incorrectly charged L-seryl-tRNA(Thr). The sequence is that of Threonine--tRNA ligase from Borrelia hermsii (strain HS1 / DAH).